The chain runs to 196 residues: N-(5'-phosphoribosyl)anthranilate isomerase (196 aa).

The protein belongs to the TrpF family.

The catalysed reaction is N-(5-phospho-beta-D-ribosyl)anthranilate = 1-(2-carboxyphenylamino)-1-deoxy-D-ribulose 5-phosphate. The protein operates within amino-acid biosynthesis; L-tryptophan biosynthesis; L-tryptophan from chorismate: step 3/5. In Nitratiruptor sp. (strain SB155-2), this protein is N-(5'-phosphoribosyl)anthranilate isomerase.